A 50-amino-acid polypeptide reads, in one-letter code: Light-harvesting protein B-880 alpha chain (50 aa).

The Cytoplasmic portion of the chain corresponds to 1-12; it reads MYKLWLLFDPRR. A helical membrane pass occupies residues 13-33; the sequence is ALVALSAFLFVLALIIHFIAL. His-29 contributes to the a bacteriochlorophyll binding site. Over 34–50 the chain is Periplasmic; it reads STDRFNWLEGKPAVKAA.

The protein belongs to the antenna complex alpha subunit family. In terms of assembly, the core complex is formed by different alpha and beta chains, binding bacteriochlorophyll molecules, and arranged most probably in tetrameric structures disposed around the reaction center. The non-pigmented gamma chains may constitute additional components.

The protein resides in the cell inner membrane. Its function is as follows. Antenna complexes are light-harvesting systems, which transfer the excitation energy to the reaction centers. The polypeptide is Light-harvesting protein B-880 alpha chain (Rhodoblastus acidophilus (Rhodopseudomonas acidophila)).